Reading from the N-terminus, the 141-residue chain is Sporulation-specific cell division protein SsgB (141 aa).

This sequence belongs to the SsgA family. Interacts with SsgA. Interacts with FtsZ (via N-terminus).

Its subcellular location is the cell septum. In terms of biological role, involved in sporulation-specific cell division. Required for early stages of sporulation. Important in the process of growth cessation prior to sporulation-specific cell division. Recruits cell division protein FtsZ to the future septum sites and tethers the contractile ring structure (Z ring) to the cytoplasmic membrane during sporulation. Stimulates polymerization and filament length of FtsZ in vitro. The protein is Sporulation-specific cell division protein SsgB of Saccharopolyspora erythraea (strain ATCC 11635 / DSM 40517 / JCM 4748 / NBRC 13426 / NCIMB 8594 / NRRL 2338).